A 394-amino-acid chain; its full sequence is Elongation factor Tu (394 aa).

The 195-residue stretch at 10–204 (KPHINIGTIG…AVDDNIPTPE (195 aa)) folds into the tr-type G domain. A G1 region spans residues 19-26 (GHVDHGKT). A GTP-binding site is contributed by 19–26 (GHVDHGKT). Thr26 is a binding site for Mg(2+). Residues 60–64 (GITIN) form a G2 region. The tract at residues 81–84 (DCPG) is G3. GTP is bound by residues 81 to 85 (DCPGH) and 136 to 139 (NKID). A G4 region spans residues 136–139 (NKID). Residues 174–176 (SAL) form a G5 region.

Belongs to the TRAFAC class translation factor GTPase superfamily. Classic translation factor GTPase family. EF-Tu/EF-1A subfamily. Monomer.

Its subcellular location is the cytoplasm. The catalysed reaction is GTP + H2O = GDP + phosphate + H(+). Functionally, GTP hydrolase that promotes the GTP-dependent binding of aminoacyl-tRNA to the A-site of ribosomes during protein biosynthesis. The polypeptide is Elongation factor Tu (Chlamydia felis (strain Fe/C-56) (Chlamydophila felis)).